The following is a 95-amino-acid chain: Synaptobrevin-A (95 aa).

The Cytoplasmic segment spans residues 1–70 (MSEPVNKVKQ…KRLMWCRNIK (70 aa)). The v-SNARE coiled-coil homology domain occupies 7–67 (KVKQTQQQVD…NEIKRLMWCR (61 aa)). Residues 71 to 91 (LTLIIIAVVVLLLVVIIVPIV) form a helical; Anchor for type IV membrane protein membrane-spanning segment. Topologically, residues 92–95 (LKFT) are vesicular.

This sequence belongs to the synaptobrevin family.

The protein resides in the cytoplasmic vesicle. It localises to the secretory vesicle membrane. Functionally, involved in the targeting and/or fusion of transport vesicles to their target membrane. The chain is Synaptobrevin-A (sybA) from Dictyostelium discoideum (Social amoeba).